Here is a 174-residue protein sequence, read N- to C-terminus: Chorismate pyruvate-lyase (174 aa).

M36, R78, L116, and E157 together coordinate substrate.

It belongs to the UbiC family. Monomer.

The protein localises to the cytoplasm. It carries out the reaction chorismate = 4-hydroxybenzoate + pyruvate. It functions in the pathway cofactor biosynthesis; ubiquinone biosynthesis. In terms of biological role, removes the pyruvyl group from chorismate, with concomitant aromatization of the ring, to provide 4-hydroxybenzoate (4HB) for the ubiquinone pathway. This chain is Chorismate pyruvate-lyase, found in Yersinia pestis bv. Antiqua (strain Angola).